We begin with the raw amino-acid sequence, 68 residues long: Wasabi receptor toxin (68 aa).

Positions 1–21 are cleaved as a signal peptide; that stretch reads MKYFTLALTLLFLLLINPCKD. Residues 22 to 35 constitute a propeptide that is removed on maturation; the sequence is MNFAWAESSEKVER. 2 disulfide bridges follow: cysteine 44/cysteine 62 and cysteine 48/cysteine 58.

The protein belongs to the short scorpion toxin superfamily. Potassium channel inhibitor kappa-KTx family. Kappa-KTx 1 subfamily. As to quaternary structure, monomer. In terms of tissue distribution, expressed by the venom gland.

It localises to the secreted. The protein localises to the host cytoplasm. In terms of biological role, cell-penetrating peptide (CPP) with defensive purpose that induces pain by specifically activating mammalian sensory neuron TRPA1 channels. It non-covalently binds to the same region than other TRPA1 agonists (irritants), but acts via a distinct biochemical mechanism. Its binding stabilizes the TRPA1 open state and diminishes calcium-permeability. Consequently, it produces pain and pain hypersensitivity, but fails to trigger efferent release of neuropeptides (CGRP) and neurogenic inflammation typically produced by noxious electrophiles. Is not active on voltage-gated potassium channels and other TRP channels. The chain is Wasabi receptor toxin from Urodacus manicatus (Black rock scorpion).